The sequence spans 415 residues: MSKLMTRTSGSSSPNTIPDQIESPTSSRSVTQTTNGSHQFVIQGYSLAKGIGVGKHIASDNFSVGGYQWTIFVYPDGKNPEDNSSYVSVFIVLASECTEVRALFELSLVDQSGKGKHKVHSHFNRSLDGGPYTLKYRGSMWGYKRFFRRSLLETSDYLKDDCLKINCTVGVVVSEMHCPRLLSIHVPDSELGSHFGKLLDTLQGSDVTFDVAGEKFQAHKLVLAARSQFFRSMFYNTLAENNSDVVISDLEPKVFKALLHFMYKDSLPGDVEPLTAHSFDLLRPSEIDDTLIVKLLAAAEMYNLSRLRLLCESHICKGISISSVSKILALSDKYNASELKSVSLKFTAENLAAVLQTKAYEDLKDDCPNLQSELLKAVAGYDDTSSSGGGKSQSVWAQLSNGGETSSRRVRQRTT.

Positions 1-33 are disordered; that stretch reads MSKLMTRTSGSSSPNTIPDQIESPTSSRSVTQT. The MATH domain maps to 35–169; sequence NGSHQFVIQG…DDCLKINCTV (135 aa). In terms of domain architecture, BTB spans 205–271; it reads SDVTFDVAGE…MYKDSLPGDV (67 aa). The disordered stretch occupies residues 385–415; sequence SSSGGGKSQSVWAQLSNGGETSSRRVRQRTT. Over residues 392 to 405 the composition is skewed to polar residues; the sequence is SQSVWAQLSNGGET.

It belongs to the Tdpoz family. As to quaternary structure, heterodimer with BPM1. Interacts with RAP2-4. Interacts with CUL3A. Binds to MYB56 at the promoter of FLOWERING LOCUS T (FT). As to expression, ubiquitous.

The protein localises to the nucleus. The protein resides in the cytoplasm. It functions in the pathway protein modification; protein ubiquitination. Its function is as follows. May act as a substrate-specific adapter of an E3 ubiquitin-protein ligase complex (CUL3-RBX1-BTB) which mediates the ubiquitination and subsequent proteasomal degradation of target proteins. This Arabidopsis thaliana (Mouse-ear cress) protein is BTB/POZ and MATH domain-containing protein 6 (BPM6).